The chain runs to 409 residues: Putative competence-damage inducible protein (409 aa).

The protein belongs to the CinA family.

In Clostridium botulinum (strain Loch Maree / Type A3), this protein is Putative competence-damage inducible protein.